The sequence spans 115 residues: Pycsar effector protein TpPycTM (115 aa).

2 helical membrane-spanning segments follow: residues 44-64 (IGNL…YATN) and 74-94 (VWNI…VILV).

It localises to the cell inner membrane. In terms of biological role, pycsar (pyrimidine cyclase system for antiphage resistance) provides immunity against bacteriophage. The pyrimidine cyclase (PycC) synthesizes cyclic nucleotides in response to infection; these serve as specific second messenger signals. The signals activate the adjacent effector, leading to bacterial cell death and abortive phage infection. A clade C Pycsar system. Functionally, the effector gene of a two-gene Pycsar system. Expression of this and adjacent uridylate cyclase TpPycC (AC A0A1T4LJ54) probably confers resistance to bacteriophage. The genes are probably only expressed in response to bacteriophage infection. Probably only responds to cUMP (produced by its cognate NTP cyclase), acts by impairing membrane integrity. This chain is Pycsar effector protein TpPycTM, found in Treponema porcinum.